Consider the following 740-residue polypeptide: Vacuolar protein sorting-associated protein 51 homolog (740 aa).

2 coiled-coil regions span residues 65–87 (SATD…VNLL) and 322–344 (RALD…LEVQ).

It belongs to the VPS51 family. In terms of assembly, component of the Golgi-associated retrograde protein (GARP) complex.

Its function is as follows. May act as a component of the GARP complex that is involved in retrograde transport from early and late endosomes to the trans-Golgi network (TGN). This chain is Vacuolar protein sorting-associated protein 51 homolog, found in Drosophila melanogaster (Fruit fly).